The sequence spans 440 residues: tRNA-2-methylthio-N(6)-dimethylallyladenosine synthase (440 aa).

The 117-residue stretch at 7–123 (NTFYIHTFGC…LPQLIEQARS (117 aa)) folds into the MTTase N-terminal domain. Cysteine 16, cysteine 52, cysteine 86, cysteine 159, cysteine 163, and cysteine 166 together coordinate [4Fe-4S] cluster. The 231-residue stretch at 145 to 375 (RQGSISAFVP…IDLQNTISGE (231 aa)) folds into the Radical SAM core domain. A TRAM domain is found at 378-440 (QQAIGSVVEV…TSATLTGRPV (63 aa)).

Belongs to the methylthiotransferase family. MiaB subfamily. In terms of assembly, monomer. It depends on [4Fe-4S] cluster as a cofactor.

It localises to the cytoplasm. The catalysed reaction is N(6)-dimethylallyladenosine(37) in tRNA + (sulfur carrier)-SH + AH2 + 2 S-adenosyl-L-methionine = 2-methylsulfanyl-N(6)-dimethylallyladenosine(37) in tRNA + (sulfur carrier)-H + 5'-deoxyadenosine + L-methionine + A + S-adenosyl-L-homocysteine + 2 H(+). In terms of biological role, catalyzes the methylthiolation of N6-(dimethylallyl)adenosine (i(6)A), leading to the formation of 2-methylthio-N6-(dimethylallyl)adenosine (ms(2)i(6)A) at position 37 in tRNAs that read codons beginning with uridine. The protein is tRNA-2-methylthio-N(6)-dimethylallyladenosine synthase of Pelodictyon phaeoclathratiforme (strain DSM 5477 / BU-1).